The primary structure comprises 614 residues: Maltose permease MAL61 (614 aa).

The interval 1 to 48 (MKGLSSLINRKKDRNDSHLDEIENGVNATEFNSIEMEEQGKKSDFDLS) is disordered. At 1–108 (MKGLSSLINR…AAAWSLLVST (108 aa)) the chain is on the cytoplasmic side. A compositionally biased stretch (basic and acidic residues) spans 38–48 (EQGKKSDFDLS). Residues 109 to 129 (TLIQEGYDTAILGAFYALPVF) form a helical membrane-spanning segment. Residues 130-144 (QKKYGSLNSNTGDYE) lie on the Extracellular side of the membrane. The chain crosses the membrane as a helical span at residues 145–165 (ISVSWQIGLCLCYMAGEIVGL). At 166–180 (QVTGPSVDYMGNRYT) the chain is on the cytoplasmic side. The chain crosses the membrane as a helical span at residues 181–201 (LIMALFFLAAFIFILYFCKSL). Gly202 is a topological domain (extracellular). A helical transmembrane segment spans residues 203–223 (MIAVGQALCGMPWGCFQCLTV). The Cytoplasmic segment spans residues 224–236 (SYASEICPLALRY). The helical transmembrane segment at 237-257 (YLTTYSNLCWTFGQLFAAGIM) threads the bilayer. Residues 258–272 (KNSQNKYANSELGYK) are Extracellular-facing. Residues 273-293 (LPFALQWIWPLPLAVGIFLAP) form a helical membrane-spanning segment. Topologically, residues 294-364 (ESPWWLVKKG…KDGINRRRTR (71 aa)) are cytoplasmic. Residues 365–385 (IACLCWIGQCSCGASLIGYST) form a helical membrane-spanning segment. The Extracellular segment spans residues 386-398 (YFYEKAGVSTDTA). The chain crosses the membrane as a helical span at residues 399-419 (FTFSIIQYCLGIAATFVSWWA). Residues 420-427 (SKYCGRFD) lie on the Cytoplasmic side of the membrane. A helical transmembrane segment spans residues 428 to 448 (LYAFGLAFQAIMFFIIGGLGC). At 449–460 (SDTHGAKMGSGA) the chain is on the extracellular side. The helical transmembrane segment at 461–481 (LLMVVAFFYNLGIAPVVFCLV) threads the bilayer. Over 482–493 (SEMPSSRLRTKT) the chain is Cytoplasmic. The chain crosses the membrane as a helical span at residues 494-514 (IILARNAYNVIQVVVTVLIMY). At 515–526 (QLNSEKWNWGAK) the chain is on the extracellular side. A helical membrane pass occupies residues 527–547 (SGFFWGGFCLATLAWAVVDLP). Residues 548–614 (ETAGRTFIEI…GRSTPSVVNK (67 aa)) are Cytoplasmic-facing. A disordered region spans residues 594–614 (KEDLETSVVDEGRSTPSVVNK).

Belongs to the major facilitator superfamily. Sugar transporter (TC 2.A.1.1) family.

It localises to the membrane. Its function is as follows. Transporter for maltose. The sequence is that of Maltose permease MAL61 (MAL61) from Saccharomyces cerevisiae (Baker's yeast).